The sequence spans 485 residues: Glutamyl-tRNA(Gln) amidotransferase subunit A (485 aa).

Catalysis depends on charge relay system residues Lys-79 and Ser-154. Ser-178 serves as the catalytic Acyl-ester intermediate.

It belongs to the amidase family. GatA subfamily. Heterotrimer of A, B and C subunits.

It carries out the reaction L-glutamyl-tRNA(Gln) + L-glutamine + ATP + H2O = L-glutaminyl-tRNA(Gln) + L-glutamate + ADP + phosphate + H(+). Functionally, allows the formation of correctly charged Gln-tRNA(Gln) through the transamidation of misacylated Glu-tRNA(Gln) in organisms which lack glutaminyl-tRNA synthetase. The reaction takes place in the presence of glutamine and ATP through an activated gamma-phospho-Glu-tRNA(Gln). This is Glutamyl-tRNA(Gln) amidotransferase subunit A from Bacillus velezensis (strain DSM 23117 / BGSC 10A6 / LMG 26770 / FZB42) (Bacillus amyloliquefaciens subsp. plantarum).